The primary structure comprises 1333 residues: DNA-directed RNA polymerase subunit beta' (1333 aa).

Residues cysteine 60, cysteine 62, cysteine 75, and cysteine 78 each coordinate Zn(2+). Mg(2+) contacts are provided by aspartate 535, aspartate 537, and aspartate 539. The Zn(2+) site is built by cysteine 901, cysteine 983, cysteine 990, and cysteine 993.

The protein belongs to the RNA polymerase beta' chain family. In terms of assembly, the RNAP catalytic core consists of 2 alpha, 1 beta, 1 beta' and 1 omega subunit. When a sigma factor is associated with the core the holoenzyme is formed, which can initiate transcription. Mg(2+) is required as a cofactor. It depends on Zn(2+) as a cofactor.

It catalyses the reaction RNA(n) + a ribonucleoside 5'-triphosphate = RNA(n+1) + diphosphate. Functionally, DNA-dependent RNA polymerase catalyzes the transcription of DNA into RNA using the four ribonucleoside triphosphates as substrates. The protein is DNA-directed RNA polymerase subunit beta' of Corynebacterium glutamicum (strain ATCC 13032 / DSM 20300 / JCM 1318 / BCRC 11384 / CCUG 27702 / LMG 3730 / NBRC 12168 / NCIMB 10025 / NRRL B-2784 / 534).